The sequence spans 201 residues: Small ribosomal subunit protein uS4 (201 aa).

The disordered stretch occupies residues 1–45 (MARYTGPLTKKSRRLGTDLVGNDKSFERRPYPPGVHGRGRTKDSE). The S4 RNA-binding domain occupies 91-157 (SRLDNVVYRA…PPIVIARETF (67 aa)).

This sequence belongs to the universal ribosomal protein uS4 family. In terms of assembly, part of the 30S ribosomal subunit. Contacts protein S5. The interaction surface between S4 and S5 is involved in control of translational fidelity.

Functionally, one of the primary rRNA binding proteins, it binds directly to 16S rRNA where it nucleates assembly of the body of the 30S subunit. Its function is as follows. With S5 and S12 plays an important role in translational accuracy. This is Small ribosomal subunit protein uS4 from Cutibacterium acnes (strain DSM 16379 / KPA171202) (Propionibacterium acnes).